Here is a 132-residue protein sequence, read N- to C-terminus: Small ribosomal subunit protein uS8 (132 aa).

It belongs to the universal ribosomal protein uS8 family. Part of the 30S ribosomal subunit. Contacts proteins S5 and S12.

In terms of biological role, one of the primary rRNA binding proteins, it binds directly to 16S rRNA central domain where it helps coordinate assembly of the platform of the 30S subunit. The polypeptide is Small ribosomal subunit protein uS8 (Paramagnetospirillum magneticum (strain ATCC 700264 / AMB-1) (Magnetospirillum magneticum)).